The sequence spans 495 residues: Cytoplasmic alpha-amylase (495 aa).

2 residues coordinate Ca(2+): N104 and D198. The Nucleophile role is filled by D235. Ca(2+) is bound at residue H239. E265 functions as the Proton donor in the catalytic mechanism.

This sequence belongs to the glycosyl hydrolase 13 family. Monomer. The cofactor is Ca(2+).

It is found in the cytoplasm. The enzyme catalyses Endohydrolysis of (1-&gt;4)-alpha-D-glucosidic linkages in polysaccharides containing three or more (1-&gt;4)-alpha-linked D-glucose units.. This Escherichia coli (strain K12) protein is Cytoplasmic alpha-amylase (amyA).